The following is a 455-amino-acid chain: Kynureninase (455 aa).

Residues Leu94, Thr95, 122–125 (FPSD), Asp208, His211, and Tyr233 contribute to the pyridoxal 5'-phosphate site. Lys234 is modified (N6-(pyridoxal phosphate)lysine). Positions 275 and 303 each coordinate pyridoxal 5'-phosphate.

This sequence belongs to the kynureninase family. Homodimer. It depends on pyridoxal 5'-phosphate as a cofactor.

The protein localises to the cytoplasm. The catalysed reaction is L-kynurenine + H2O = anthranilate + L-alanine + H(+). It carries out the reaction 3-hydroxy-L-kynurenine + H2O = 3-hydroxyanthranilate + L-alanine + H(+). Its pathway is amino-acid degradation; L-kynurenine degradation; L-alanine and anthranilate from L-kynurenine: step 1/1. It functions in the pathway cofactor biosynthesis; NAD(+) biosynthesis; quinolinate from L-kynurenine: step 2/3. Catalyzes the cleavage of L-kynurenine (L-Kyn) and L-3-hydroxykynurenine (L-3OHKyn) into anthranilic acid (AA) and 3-hydroxyanthranilic acid (3-OHAA), respectively. This is Kynureninase from Vanderwaltozyma polyspora (strain ATCC 22028 / DSM 70294 / BCRC 21397 / CBS 2163 / NBRC 10782 / NRRL Y-8283 / UCD 57-17) (Kluyveromyces polysporus).